The primary structure comprises 599 residues: Aspartate--tRNA(Asp/Asn) ligase (599 aa).

Residue Glu172 coordinates L-aspartate. The segment at 196–199 (QLFK) is aspartate. Arg218 serves as a coordination point for L-aspartate. ATP-binding positions include 218-220 (RDE) and Gln227. Residue His451 coordinates L-aspartate. Position 485 (Glu485) interacts with ATP. Arg492 serves as a coordination point for L-aspartate. An ATP-binding site is contributed by 537 to 540 (GLDR).

It belongs to the class-II aminoacyl-tRNA synthetase family. Type 1 subfamily. As to quaternary structure, homodimer.

Its subcellular location is the cytoplasm. The enzyme catalyses tRNA(Asx) + L-aspartate + ATP = L-aspartyl-tRNA(Asx) + AMP + diphosphate. In terms of biological role, aspartyl-tRNA synthetase with relaxed tRNA specificity since it is able to aspartylate not only its cognate tRNA(Asp) but also tRNA(Asn). Reaction proceeds in two steps: L-aspartate is first activated by ATP to form Asp-AMP and then transferred to the acceptor end of tRNA(Asp/Asn). The sequence is that of Aspartate--tRNA(Asp/Asn) ligase from Dechloromonas aromatica (strain RCB).